The following is a 520-amino-acid chain: Glucose starvation modulator protein 1 (520 aa).

Positions 20–48 (CVFCHEKHLQCSNERPCKNCVKRGLAHEC) form a DNA-binding region, zn(2)-C6 fungal-type. The PAS domain maps to 376 to 445 (DYEKLSQLNS…FRLFKTVAVG (70 aa)).

Belongs to the ERT1/acuK family.

Its subcellular location is the nucleus. In terms of biological role, transcription factor which regulates nonfermentable carbon utilization. The protein is Glucose starvation modulator protein 1 (GSM1) of Scheffersomyces stipitis (strain ATCC 58785 / CBS 6054 / NBRC 10063 / NRRL Y-11545) (Yeast).